The chain runs to 279 residues: HTH-type transcriptional activator RhaS (279 aa).

The region spanning 175–273 (QALLGWLQNN…SQAPKSLRHQ (99 aa)) is the HTH araC/xylS-type domain. 2 DNA-binding regions (H-T-H motif) span residues 192–213 (GSLA…KQHT) and 240–263 (ITTI…RKAF).

Binds DNA as a dimer.

Its subcellular location is the cytoplasm. Functionally, activates expression of the rhaBAD and rhaT operons. The chain is HTH-type transcriptional activator RhaS from Pectobacterium carotovorum subsp. carotovorum (strain PC1).